The sequence spans 97 residues: Mapk-regulated corepressor-interacting protein 1 (97 aa).

The tract at residues Met-1–Thr-30 is disordered. Phosphoserine is present on Ser-21. Thr-30 carries the post-translational modification Phosphothreonine. Tyr-41 is modified (phosphotyrosine). A disordered region spans residues Thr-77–Ser-97. Residues Pro-80–Ser-84 carry the PXDLS motif motif. Over residues Asp-82–Ser-97 the composition is skewed to basic and acidic residues.

Belongs to the MCRIP family. As to quaternary structure, interacts (unphosphorylated form, via the PXDLS motif) with CTBP1, competitively inhibiting CTBP-ZEB1 interaction. Interacts with CTBP2. Interacts with MCRIP2. Interacts with DDX6. Post-translationally, phosphorylation by MAPK3/1 (ERK1/2) regulates MCRIP1 binding to CTBP(s).

It is found in the nucleus. The protein resides in the cytoplasm. It localises to the stress granule. In terms of biological role, the phosphorylation status of MCRIP1 functions as a molecular switch to regulate epithelial-mesenchymal transition. Unphosphorylated MCRIP1 binds to and inhibits the transcriptional corepressor CTBP(s). When phosphorylated by MAPK/ERK, MCRIP1 releases CTBP(s) resulting in transcriptional silencing of the E-cadherin gene and induction of epithelial-mesenchymal transition. In Bos taurus (Bovine), this protein is Mapk-regulated corepressor-interacting protein 1 (MCRIP1).